The sequence spans 242 residues: Protein odd-skipped-related 1 (242 aa).

C2H2-type zinc fingers lie at residues 128-150 (FICKYCARHFTKSYNLMIHERTH), 156-178 (FHCETCGKSFRRQDHLRDHKYIH), and 184-207 (HKCEICGKGFCQLRTLNVHRSCHH).

Belongs to the Odd C2H2-type zinc-finger protein family.

It is found in the nucleus. Functionally, may function as transcription regulator. Essential for larval development. Required for morphogenesis and function of the digestive tract. This Caenorhabditis elegans protein is Protein odd-skipped-related 1.